A 168-amino-acid chain; its full sequence is Disulfide bond formation protein B (168 aa).

The Cytoplasmic segment spans residues 1 to 11 (MSNPMRPVRSI). The helical transmembrane segment at 12-28 (LLAIFTGCAGLIGYALY) threads the bilayer. Over 29–46 (LQLVENLLPCPLCVVQRM) the chain is Periplasmic. Cysteine 38 and cysteine 41 form a disulfide bridge. A helical membrane pass occupies residues 47-63 (AYWLIGLTALAGFFHTP). Over 64–69 (ETTGRR) the chain is Cytoplasmic. Residues 70–87 (IYAGLMAVFAFTGGLVAL) traverse the membrane as a helical segment. Over 88-143 (RQAWLVRYPEAFECGISPEEAFLNALPLARWWPVMFEANGDCADVTWKFASLTLPD) the chain is Periplasmic. An intrachain disulfide couples cysteine 101 to cysteine 129. Residues 144-162 (WSAIFFMILAALSIYVLLV) traverse the membrane as a helical segment. The Cytoplasmic portion of the chain corresponds to 163-168 (RENQRE).

Belongs to the DsbB family.

It localises to the cell inner membrane. Its function is as follows. Required for disulfide bond formation in some periplasmic proteins. Acts by oxidizing the DsbA protein. This chain is Disulfide bond formation protein B, found in Nitrosospira multiformis (strain ATCC 25196 / NCIMB 11849 / C 71).